We begin with the raw amino-acid sequence, 189 residues long: Putative manganese efflux pump MntP (189 aa).

6 helical membrane-spanning segments follow: residues 3 to 23 (PVATLFLAFAMSTDAFAAAIG), 41 to 61 (LIFGVIEALTPLVGWFLGKAA), 62 to 82 (AQYVSAWDHWIAFSLLLVLGA), 104 to 124 (FWLLALTGFATSIDAMAVGAG), 132 to 152 (IYSTAAAIGLATMAMVTIGVM), and 168 to 188 (AGGIVLIGIGSTILAEHLNIF).

It belongs to the MntP (TC 9.B.29) family.

The protein resides in the cell inner membrane. In terms of biological role, probably functions as a manganese efflux pump. The protein is Putative manganese efflux pump MntP of Paraburkholderia phytofirmans (strain DSM 17436 / LMG 22146 / PsJN) (Burkholderia phytofirmans).